Reading from the N-terminus, the 356-residue chain is Histidinol-phosphate aminotransferase (356 aa).

Position 214 is an N6-(pyridoxal phosphate)lysine (Lys-214).

This sequence belongs to the class-II pyridoxal-phosphate-dependent aminotransferase family. Histidinol-phosphate aminotransferase subfamily. In terms of assembly, homodimer. Requires pyridoxal 5'-phosphate as cofactor.

The enzyme catalyses L-histidinol phosphate + 2-oxoglutarate = 3-(imidazol-4-yl)-2-oxopropyl phosphate + L-glutamate. It participates in amino-acid biosynthesis; L-histidine biosynthesis; L-histidine from 5-phospho-alpha-D-ribose 1-diphosphate: step 7/9. This chain is Histidinol-phosphate aminotransferase (hisC), found in Escherichia coli O157:H7.